The following is a 749-amino-acid chain: Protein Niban 2 (749 aa).

A lipid anchor (N-myristoyl glycine) is attached at Gly-2. A PH domain is found at 68-192 (RIIFSGNLFQ…WQAVLQDCVR (125 aa)). 11 positions are modified to phosphoserine: Ser-568, Ser-574, Ser-607, Ser-628, Ser-647, Ser-650, Ser-669, Ser-674, Ser-685, Ser-695, and Ser-699. The disordered stretch occupies residues 589 to 749 (WGEQYGDSGD…EDSAGVQTEF (161 aa)). Over residues 710–719 (VDLEPPKPSD) the composition is skewed to basic and acidic residues. Residues 723–749 (GEQVSSPGSRPPIHTTTEDSAGVQTEF) are compositionally biased toward polar residues.

This sequence belongs to the Niban family. As apoptosis proceeds, degraded via an proteasome-independent pathway, probably by caspases.

The protein resides in the cytoplasm. It localises to the cytosol. Its subcellular location is the cell junction. The protein localises to the adherens junction. It is found in the membrane. May play a role in apoptosis suppression. This chain is Protein Niban 2, found in Mus musculus (Mouse).